A 193-amino-acid polypeptide reads, in one-letter code: Shikimate kinase (193 aa).

31 to 36 (GVGKTT) contributes to the ATP binding site. Threonine 35 lines the Mg(2+) pocket. Substrate-binding residues include aspartate 53, arginine 77, and glycine 103. Arginine 141 contacts ATP. Position 160 (arginine 160) interacts with substrate. ATP is bound at residue glutamine 176.

It belongs to the shikimate kinase family. In terms of assembly, monomer. The cofactor is Mg(2+).

Its subcellular location is the cytoplasm. It carries out the reaction shikimate + ATP = 3-phosphoshikimate + ADP + H(+). Its pathway is metabolic intermediate biosynthesis; chorismate biosynthesis; chorismate from D-erythrose 4-phosphate and phosphoenolpyruvate: step 5/7. In terms of biological role, catalyzes the specific phosphorylation of the 3-hydroxyl group of shikimic acid using ATP as a cosubstrate. This is Shikimate kinase from Novosphingobium aromaticivorans (strain ATCC 700278 / DSM 12444 / CCUG 56034 / CIP 105152 / NBRC 16084 / F199).